The following is a 247-amino-acid chain: Small ribosomal subunit protein uS2 (247 aa).

This sequence belongs to the universal ribosomal protein uS2 family.

This is Small ribosomal subunit protein uS2 from Cupriavidus metallidurans (strain ATCC 43123 / DSM 2839 / NBRC 102507 / CH34) (Ralstonia metallidurans).